The following is a 175-amino-acid chain: uncharacterized protein (175 aa).

The protein belongs to the asfivirus B175L family.

This is an uncharacterized protein from African swine fever virus (strain Badajoz 1971 Vero-adapted) (Ba71V).